Reading from the N-terminus, the 118-residue chain is Large ribosomal subunit protein bL20c (118 aa).

Belongs to the bacterial ribosomal protein bL20 family.

Its subcellular location is the plastid. It localises to the chloroplast. Functionally, binds directly to 23S ribosomal RNA and is necessary for the in vitro assembly process of the 50S ribosomal subunit. It is not involved in the protein synthesizing functions of that subunit. This chain is Large ribosomal subunit protein bL20c, found in Gracilaria tenuistipitata var. liui (Red alga).